Here is a 734-residue protein sequence, read N- to C-terminus: Rho GTPase-activating protein gacL (734 aa).

In terms of domain architecture, Rho-GAP spans 141 to 339; the sequence is ISLDTLIAKE…QMILHYDTLF (199 aa). WD repeat units lie at residues 381 to 430, 539 to 579, and 585 to 623; these read GHNK…FIKE, LFMK…TIHQ, and KRPK…LEHK.

It localises to the cytoplasm. In terms of biological role, rho GTPase-activating protein involved in the signal transduction pathway. The polypeptide is Rho GTPase-activating protein gacL (gacL) (Dictyostelium discoideum (Social amoeba)).